The primary structure comprises 354 residues: Guanine nucleotide-binding protein G(i) subunit alpha-3 (354 aa).

Residue Gly-2 is the site of N-myristoyl glycine attachment. Cys-3 carries the S-palmitoyl cysteine lipid modification. The G-alpha domain occupies Lys-32–Tyr-354. A G1 motif region spans residues Lys-35–Thr-48. The GTP site is built by Gly-42, Glu-43, Ser-44, Gly-45, Lys-46, Ser-47, Thr-48, Asp-150, Ser-151, Leu-175, Arg-176, Thr-177, Arg-178, Val-179, Lys-180, Thr-181, Val-201, Gly-203, Asn-269, Lys-270, Asp-272, Leu-273, Cys-325, Ala-326, and Thr-327. Residue Ser-47 coordinates Mg(2+). The interval Asp-173–Thr-181 is G2 motif. Thr-181 contributes to the Mg(2+) binding site. The tract at residues Phe-196–Arg-205 is G3 motif. The G4 motif stretch occupies residues Ile-265–Asp-272. Positions Thr-324 to Thr-329 are G5 motif.

Belongs to the G-alpha family. G(i/o/t/z) subfamily. Heterotrimeric G proteins are composed of 3 units; alpha, beta and gamma. The alpha subunit contains the guanine nucleotide binding site. GTP binding causes dissociation of the heterotrimer, liberating the individual subunits so that they can interact with downstream effector proteins. Forms a complex with CCDC88A/GIV and EGFR which leads to enhanced EGFR signaling and triggering of cell migration; ligand stimulation is required for recruitment of GNAI3 to the complex. Interacts (inactive GDP-bound form) with CCDC88A/GIV (via GBA motif); the interaction leads to activation of GNAI3. Interacts (inactive GDP-bound form) with CCDC88C/DAPLE (via GBA motif); the interaction leads to activation of GNAI3. Interacts (inactive GDP-bound form) with NUCB1 (via GBA motif) and NUCB2 (via GBA motif); the interaction leads to activation of GNAI3. Interacts (inactive GDP-bound form) with PLCD4 (via GBA motif); the interaction leads to activation of GNAI3. Interacts with INSR; the interaction is probably mediated by CCDC88A/GIV. Interacts with GPSM1. Interacts (GDP-bound form) with GPSM2 (via GoLoco domains). Does not interact with RGS2. Interacts with RGS8 and RGS10; this strongly enhances the intrinsic GTPase activity. Interacts with RGS12. Interacts with RGS16; this strongly enhances the intrinsic GTPase activity. Interacts (via active GTP- or inactive GDP-bound form) with RGS14. Interacts (via active GTP-bound form) with TRPC5 (via ANK repeats) in a homotetrameric ion channel; the interaction is direct and activates the channel activity. In terms of tissue distribution, ubiquitous.

The protein resides in the cytoplasm. Its subcellular location is the cell membrane. It is found in the cytoskeleton. It localises to the microtubule organizing center. The protein localises to the centrosome. Heterotrimeric guanine nucleotide-binding proteins (G proteins) function as transducers downstream of G protein-coupled receptors (GPCRs) in numerous signaling cascades. The alpha chain contains the guanine nucleotide binding site and alternates between an active, GTP-bound state and an inactive, GDP-bound state. Signaling by an activated GPCR promotes GDP release and GTP binding. The alpha subunit has a low GTPase activity that converts bound GTP to GDP, thereby terminating the signal. Both GDP release and GTP hydrolysis are modulated by numerous regulatory proteins. Signaling is mediated via effector proteins, such as adenylate cyclase. Inhibits adenylate cyclase activity, leading to decreased intracellular cAMP levels. Stimulates the activity of receptor-regulated K(+) channels. The active GTP-bound form prevents the association of RGS14 with centrosomes and is required for the translocation of RGS14 from the cytoplasm to the plasma membrane. May play a role in cell division. The active GTP-bound form activates the calcium permeant TRPC5 ion channels. In Rattus norvegicus (Rat), this protein is Guanine nucleotide-binding protein G(i) subunit alpha-3 (Gnai3).